We begin with the raw amino-acid sequence, 233 residues long: Large ribosomal subunit protein uL1 (233 aa).

This sequence belongs to the universal ribosomal protein uL1 family. Part of the 50S ribosomal subunit.

Binds directly to 23S rRNA. The L1 stalk is quite mobile in the ribosome, and is involved in E site tRNA release. Its function is as follows. Protein L1 is also a translational repressor protein, it controls the translation of the L11 operon by binding to its mRNA. This is Large ribosomal subunit protein uL1 from Aeromonas salmonicida (strain A449).